The primary structure comprises 89 residues: UPF0145 protein MJ1170 (89 aa).

The protein belongs to the UPF0145 family. Highly divergent.

The polypeptide is UPF0145 protein MJ1170 (Methanocaldococcus jannaschii (strain ATCC 43067 / DSM 2661 / JAL-1 / JCM 10045 / NBRC 100440) (Methanococcus jannaschii)).